A 300-amino-acid chain; its full sequence is GTPase Era (300 aa).

An Era-type G domain is found at 8-176 (RCGYVAIVGR…ERLVAGRLPQ (169 aa)). The segment at 16-23 (GRPNVGKS) is G1. 16–23 (GRPNVGKS) is a binding site for GTP. Residues 42–46 (QTTRH) form a G2 region. The segment at 63-66 (DTPG) is G3. GTP is bound by residues 63–67 (DTPGL) and 125–128 (NKAD). The interval 125-128 (NKAD) is G4. Positions 155–157 (ISA) are G5. Residues 199–283 (VREKIMRQLG…MLNLWVKVKG (85 aa)) enclose the KH type-2 domain.

The protein belongs to the TRAFAC class TrmE-Era-EngA-EngB-Septin-like GTPase superfamily. Era GTPase family. As to quaternary structure, monomer.

Its subcellular location is the cytoplasm. The protein resides in the cell inner membrane. An essential GTPase that binds both GDP and GTP, with rapid nucleotide exchange. Plays a role in 16S rRNA processing and 30S ribosomal subunit biogenesis and possibly also in cell cycle regulation and energy metabolism. In Azotobacter vinelandii (strain DJ / ATCC BAA-1303), this protein is GTPase Era.